Here is a 467-residue protein sequence, read N- to C-terminus: DNA repair protein RadA (467 aa).

The C4-type zinc finger occupies 10-27 (CQNCGAVHSRWAGKCDSC). An ATP-binding site is contributed by 98 to 105 (GDPGIGKS). The RadA KNRFG motif motif lies at 260 to 264 (KNRFG). The tract at residues 359 to 467 (DVYLNVAGGY…RIAASGAGKK (109 aa)) is lon-protease-like.

It belongs to the RecA family. RadA subfamily.

Functionally, DNA-dependent ATPase involved in processing of recombination intermediates, plays a role in repairing DNA breaks. Stimulates the branch migration of RecA-mediated strand transfer reactions, allowing the 3' invading strand to extend heteroduplex DNA faster. Binds ssDNA in the presence of ADP but not other nucleotides, has ATPase activity that is stimulated by ssDNA and various branched DNA structures, but inhibited by SSB. Does not have RecA's homology-searching function. The sequence is that of DNA repair protein RadA from Brucella abortus (strain 2308).